The primary structure comprises 428 residues: Protein clpf-1 (428 aa).

Residues Glu-16 and Arg-56 each coordinate ATP. Residues 99–118 (KKREEQAVSNSSKPKGPRLL) form a disordered region. 124-129 (DVGKTT) is an ATP binding site.

Belongs to the Clp1 family. Clp1 subfamily.

The protein resides in the nucleus. In terms of biological role, required for endonucleolytic cleavage during polyadenylation-dependent pre-mRNA 3'-end formation. The protein is Protein clpf-1 of Caenorhabditis briggsae.